The following is a 402-amino-acid chain: 4-hydroxy-3-methylbut-2-enyl diphosphate reductase (402 aa).

Cys66 contacts [4Fe-4S] cluster. His96 contributes to the (2E)-4-hydroxy-3-methylbut-2-enyl diphosphate binding site. His96 lines the dimethylallyl diphosphate pocket. His96 serves as a coordination point for isopentenyl diphosphate. Cys157 lines the [4Fe-4S] cluster pocket. His185 lines the (2E)-4-hydroxy-3-methylbut-2-enyl diphosphate pocket. Residue His185 participates in dimethylallyl diphosphate binding. His185 provides a ligand contact to isopentenyl diphosphate. Residue Glu187 is the Proton donor of the active site. Thr250 provides a ligand contact to (2E)-4-hydroxy-3-methylbut-2-enyl diphosphate. [4Fe-4S] cluster is bound at residue Cys288. Positions 317, 318, 319, and 379 each coordinate (2E)-4-hydroxy-3-methylbut-2-enyl diphosphate. Ser317, Ser318, Asn319, and Ser379 together coordinate dimethylallyl diphosphate. Positions 317, 318, 319, and 379 each coordinate isopentenyl diphosphate.

The protein belongs to the IspH family. [4Fe-4S] cluster serves as cofactor.

The catalysed reaction is isopentenyl diphosphate + 2 oxidized [2Fe-2S]-[ferredoxin] + H2O = (2E)-4-hydroxy-3-methylbut-2-enyl diphosphate + 2 reduced [2Fe-2S]-[ferredoxin] + 2 H(+). It carries out the reaction dimethylallyl diphosphate + 2 oxidized [2Fe-2S]-[ferredoxin] + H2O = (2E)-4-hydroxy-3-methylbut-2-enyl diphosphate + 2 reduced [2Fe-2S]-[ferredoxin] + 2 H(+). It functions in the pathway isoprenoid biosynthesis; dimethylallyl diphosphate biosynthesis; dimethylallyl diphosphate from (2E)-4-hydroxy-3-methylbutenyl diphosphate: step 1/1. It participates in isoprenoid biosynthesis; isopentenyl diphosphate biosynthesis via DXP pathway; isopentenyl diphosphate from 1-deoxy-D-xylulose 5-phosphate: step 6/6. In terms of biological role, catalyzes the conversion of 1-hydroxy-2-methyl-2-(E)-butenyl 4-diphosphate (HMBPP) into a mixture of isopentenyl diphosphate (IPP) and dimethylallyl diphosphate (DMAPP). Acts in the terminal step of the DOXP/MEP pathway for isoprenoid precursor biosynthesis. The protein is 4-hydroxy-3-methylbut-2-enyl diphosphate reductase of Nostoc punctiforme (strain ATCC 29133 / PCC 73102).